Consider the following 98-residue polypeptide: Cobalt transport protein CbiN (98 aa).

2 helical membrane-spanning segments follow: residues 6-26 (VLMI…YSGL) and 68-88 (SLLF…FFGY).

The protein belongs to the CbiN family. Forms an energy-coupling factor (ECF) transporter complex composed of an ATP-binding protein (A component, CbiO), a transmembrane protein (T component, CbiQ) and 2 possible substrate-capture proteins (S components, CbiM and CbiN) of unknown stoichimetry.

It is found in the cell membrane. The protein operates within cofactor biosynthesis; adenosylcobalamin biosynthesis. Its function is as follows. Part of the energy-coupling factor (ECF) transporter complex CbiMNOQ involved in cobalt import. In Methanococcus maripaludis (strain DSM 14266 / JCM 13030 / NBRC 101832 / S2 / LL), this protein is Cobalt transport protein CbiN.